A 159-amino-acid polypeptide reads, in one-letter code: NADH-quinone oxidoreductase subunit I (159 aa).

4Fe-4S ferredoxin-type domains are found at residues 51 to 80 (RRYE…IEAD) and 90 to 119 (TRYD…EGPN). Residues C60, C63, C66, C70, C99, C102, C105, and C109 each coordinate [4Fe-4S] cluster.

The protein belongs to the complex I 23 kDa subunit family. As to quaternary structure, NDH-1 is composed of 14 different subunits. Subunits NuoA, H, J, K, L, M, N constitute the membrane sector of the complex. The cofactor is [4Fe-4S] cluster.

It localises to the cell inner membrane. It carries out the reaction a quinone + NADH + 5 H(+)(in) = a quinol + NAD(+) + 4 H(+)(out). NDH-1 shuttles electrons from NADH, via FMN and iron-sulfur (Fe-S) centers, to quinones in the respiratory chain. The immediate electron acceptor for the enzyme in this species is believed to be ubiquinone. Couples the redox reaction to proton translocation (for every two electrons transferred, four hydrogen ions are translocated across the cytoplasmic membrane), and thus conserves the redox energy in a proton gradient. This Rickettsia rickettsii (strain Sheila Smith) protein is NADH-quinone oxidoreductase subunit I.